Reading from the N-terminus, the 883-residue chain is Probable pre-mRNA-splicing factor ATP-dependent RNA helicase DEAH8 (883 aa).

A Helicase ATP-binding domain is found at 232–395; the sequence is LKLIEENQVL…FDSARIYLIP (164 aa). Residue 245 to 252 participates in ATP binding; that stretch reads GETGSGKT. Residues 342-345 carry the DEAH box motif; that stretch reads DEAH. The 174-residue stretch at 416-589 folds into the Helicase C-terminal domain; the sequence is TVIRTVVQIH…SVVLTLKSLG (174 aa). The tract at residues 845-883 is disordered; that stretch reads EDTRPKKTQRRIEEASTSKVDTNKKTRTSKVDTNKKSKR.

This sequence belongs to the DEAD box helicase family. DEAH subfamily. PRP2 sub-subfamily. As to expression, predominantly expressed in flowers.

The enzyme catalyses ATP + H2O = ADP + phosphate + H(+). Its function is as follows. May be involved in pre-mRNA splicing. This Arabidopsis thaliana (Mouse-ear cress) protein is Probable pre-mRNA-splicing factor ATP-dependent RNA helicase DEAH8.